A 310-amino-acid chain; its full sequence is Ceramide synthase LOH1 (310 aa).

Helical transmembrane passes span 16–36 (SFPT…FPTI), 85–105 (CIYY…EPWF), 131–151 (FLYM…VFWE), 157–177 (FGVS…SYIC), 216–236 (FVLF…FWIL), and 260–280 (YMFN…WVLI). The 214-residue stretch at 76–289 (RKFKESAWKC…IYRMLVKQVQ (214 aa)) folds into the TLC domain. Phosphoserine occurs at positions 300 and 302.

Expressed ubiquitously at high levels. Not observed in pollen.

Its subcellular location is the endoplasmic reticulum membrane. The catalysed reaction is (4R)-hydroxysphinganine + a fatty acyl-CoA = an N-acyl-(4R)-4-hydroxysphinganine + CoA + H(+). It carries out the reaction hexacosanoyl-CoA + (4R)-hydroxysphinganine = N-hexacosanoyl-(4R)-hydroxysphinganine + CoA + H(+). It catalyses the reaction tetracosanoyl-CoA + (4R)-hydroxysphinganine = N-tetracosanoyl-(4R)-hydroxysphinganine + CoA + H(+). Its pathway is sphingolipid metabolism. Inhibited by the mycotoxin fumonisin B(1), a sphingosine analog mycotoxins produced by pathogenic fungi. Repressed by divalent cation such as magnesium Mg(2+), copper Cu(2+), zinc Zn(2+), manganese Mn(2+), calcium Ca(2+) and cobalt Co(2+). Its function is as follows. Essential for plant growth, promotes cell division in root meristems. Catalyzes the biosynthesis of ceramide sphingolipids with C(16) to C(28) fatty acids, structural membrane lipids involved in membrane trafficking (e.g. early endosomes) and cell polarity (e.g. polar auxin transport related proteins); mostly active with t18:0 and saturated very long saturated fatty acids (C24:0 and C26:0), such as long-chain base (LCB) phytosphingosine (t18:0), lignoceroyl- and hexacosanoyl-CoAs. Mediates resistance to sphinganine-analog mycotoxins (SAMs, e.g. fumonisin B(1)) by restoring the sphingolipid biosynthesis. Could salvage the transport of GPI-anchored proteins from the endoplasmic reticulum to the Golgi apparatus in ceramides-depleted cells after SAM exposure. May prevent precocious cell death by delaying PR1 accumulation during aging. Contributes to hypoxic conditions tolerance (e.g. submergences), especially in the dark, by promoting the formation of very-long-chain (VLC) ceramide species (22:1, 24:1 and 26:1) and of VLC unsaturated ceramides, which are modulating CTR1-mediated ethylene signaling leading to endoplasmic reticulum (ER)-to-nucleus translocation of EIN2 and EIN3. The polypeptide is Ceramide synthase LOH1 (Arabidopsis thaliana (Mouse-ear cress)).